Reading from the N-terminus, the 324-residue chain is tRNA dimethylallyltransferase (324 aa).

17 to 24 (GPTASGKT) is an ATP binding site. 19 to 24 (TASGKT) provides a ligand contact to substrate. Interaction with substrate tRNA regions lie at residues 42–45 (DSAL), 166–170 (QRIQR), 251–256 (RCVGYR), and 284–291 (KRQITWLR).

It belongs to the IPP transferase family. In terms of assembly, monomer. It depends on Mg(2+) as a cofactor.

It carries out the reaction adenosine(37) in tRNA + dimethylallyl diphosphate = N(6)-dimethylallyladenosine(37) in tRNA + diphosphate. Catalyzes the transfer of a dimethylallyl group onto the adenine at position 37 in tRNAs that read codons beginning with uridine, leading to the formation of N6-(dimethylallyl)adenosine (i(6)A). In Burkholderia vietnamiensis (strain G4 / LMG 22486) (Burkholderia cepacia (strain R1808)), this protein is tRNA dimethylallyltransferase.